Here is a 574-residue protein sequence, read N- to C-terminus: ESX-1 secretion system protein EccA1 (574 aa).

Residue 335–342 coordinates ATP; the sequence is GPPGTGKT.

This sequence belongs to the CbxX/CfxQ family. As to quaternary structure, part of the ESX-1 / type VII secretion system (T7SS), which is composed of cytosolic and membrane components.

It localises to the cytoplasm. Part of the ESX-1 / type VII specialized secretion system (T7SS), which exports several proteins including EsxA and EsxB. Plays a role in DNA conjugation, in both donor and recipient strains. EccA1 exhibits ATPase activity and may provide energy for the export of ESX-1 substrates. In Mycolicibacterium smegmatis (strain ATCC 700084 / mc(2)155) (Mycobacterium smegmatis), this protein is ESX-1 secretion system protein EccA1.